The following is a 272-amino-acid chain: 3-methyl-2-oxobutanoate hydroxymethyltransferase (272 aa).

Residues Asp-51 and Asp-90 each coordinate Mg(2+). 3-methyl-2-oxobutanoate is bound by residues 51–52 (DS), Asp-90, and Lys-118. Glu-120 is a Mg(2+) binding site. Glu-187 acts as the Proton acceptor in catalysis.

Belongs to the PanB family. As to quaternary structure, homodecamer; pentamer of dimers. It depends on Mg(2+) as a cofactor.

It localises to the cytoplasm. The enzyme catalyses 3-methyl-2-oxobutanoate + (6R)-5,10-methylene-5,6,7,8-tetrahydrofolate + H2O = 2-dehydropantoate + (6S)-5,6,7,8-tetrahydrofolate. It functions in the pathway cofactor biosynthesis; (R)-pantothenate biosynthesis; (R)-pantoate from 3-methyl-2-oxobutanoate: step 1/2. Its function is as follows. Catalyzes the reversible reaction in which hydroxymethyl group from 5,10-methylenetetrahydrofolate is transferred onto alpha-ketoisovalerate to form ketopantoate. The protein is 3-methyl-2-oxobutanoate hydroxymethyltransferase of Xylella fastidiosa (strain M12).